A 326-amino-acid chain; its full sequence is 4-hydroxythreonine-4-phosphate dehydrogenase (326 aa).

The substrate site is built by His130 and Thr131. The a divalent metal cation site is built by His160, His205, and His260. Substrate is bound by residues Lys268, Asn277, and Arg286.

The protein belongs to the PdxA family. As to quaternary structure, homodimer. Zn(2+) serves as cofactor. The cofactor is Mg(2+). It depends on Co(2+) as a cofactor.

The protein resides in the cytoplasm. The enzyme catalyses 4-(phosphooxy)-L-threonine + NAD(+) = 3-amino-2-oxopropyl phosphate + CO2 + NADH. Its pathway is cofactor biosynthesis; pyridoxine 5'-phosphate biosynthesis; pyridoxine 5'-phosphate from D-erythrose 4-phosphate: step 4/5. Functionally, catalyzes the NAD(P)-dependent oxidation of 4-(phosphooxy)-L-threonine (HTP) into 2-amino-3-oxo-4-(phosphooxy)butyric acid which spontaneously decarboxylates to form 3-amino-2-oxopropyl phosphate (AHAP). The sequence is that of 4-hydroxythreonine-4-phosphate dehydrogenase from Aromatoleum aromaticum (strain DSM 19018 / LMG 30748 / EbN1) (Azoarcus sp. (strain EbN1)).